Reading from the N-terminus, the 151-residue chain is Probable ribonuclease P/MRP protein subunit POP5 (151 aa).

The protein belongs to the eukaryotic/archaeal RNase P protein component 2 family. Component of nuclear RNase P and RNase MRP ribonucleoproteins. Interacts with GAF1/RPP30.

The protein resides in the nucleus. Its subcellular location is the nucleolus. Functionally, essential protein required during embryogenesis. Component of ribonuclease P, a protein complex that generates mature tRNA molecules by cleaving their 5'-ends. Also a component of RNase MRP. This Arabidopsis thaliana (Mouse-ear cress) protein is Probable ribonuclease P/MRP protein subunit POP5 (EMB1687).